The following is a 300-amino-acid chain: 7-methylguanosine phosphate-specific 5'-nucleotidase (300 aa).

Asp41 (nucleophile) is an active-site residue. Residues Asp41 and Asp43 each contribute to the Mg(2+) site. Asp43 (proton donor) is an active-site residue. CMP is bound at residue Glu88. Position 88 (Glu88) interacts with N(7)-methyl-GMP. Substrate is bound by residues 156-157 (SA) and Lys205. A Mg(2+)-binding site is contributed by Asp230. An N6-acetyllysine modification is found at Lys256.

This sequence belongs to the pyrimidine 5'-nucleotidase family. In terms of assembly, monomer.

The protein localises to the cytoplasm. It carries out the reaction N(7)-methyl-GMP + H2O = N(7)-methylguanosine + phosphate. The catalysed reaction is CMP + H2O = cytidine + phosphate. The enzyme catalyses a ribonucleoside 5'-phosphate + H2O = a ribonucleoside + phosphate. In terms of biological role, specifically hydrolyzes 7-methylguanosine monophosphate (m(7)GMP) to 7-methylguanosine and inorganic phosphate. The specific activity for m(7)GMP may protect cells against undesired salvage of m(7)GMP and its incorporation into nucleic acids. Also has weak activity for CMP. UMP and purine nucleotides are poor substrates. The protein is 7-methylguanosine phosphate-specific 5'-nucleotidase (Nt5c3b) of Mus musculus (Mouse).